The following is an 809-amino-acid chain: Probable replication endonuclease from prophage-like region (809 aa).

Catalysis depends on O-(5'-phospho-DNA)-tyrosine intermediate residues Tyr503 and Tyr507.

Belongs to the phage GPA family.

Its function is as follows. Possible endonuclease which induces a single-strand cut and initiates DNA replication. The chain is Probable replication endonuclease from prophage-like region from Salmonella typhimurium (strain LT2 / SGSC1412 / ATCC 700720).